The chain runs to 156 residues: Arginine repressor (156 aa).

The protein belongs to the ArgR family.

The protein localises to the cytoplasm. It participates in amino-acid biosynthesis; L-arginine biosynthesis [regulation]. Its function is as follows. Regulates arginine biosynthesis genes. This chain is Arginine repressor, found in Aliivibrio fischeri (strain ATCC 700601 / ES114) (Vibrio fischeri).